Here is a 352-residue protein sequence, read N- to C-terminus: Inhibin beta C chain (352 aa).

The first 18 residues, 1-18, serve as a signal peptide directing secretion; that stretch reads MASSLLLALLFLTPTTVV. The propeptide occupies 19 to 236; it reads NPKTEGPCPA…VEGKHRVRRR (218 aa). N111, N143, N161, and N173 each carry an N-linked (GlcNAc...) asparagine glycan. Disulfide bonds link C240–C248, C247–C317, C276–C349, and C280–C351.

It belongs to the TGF-beta family. As to quaternary structure, homodimeric or heterodimeric through association with alpha and beta subunits, linked by one or more disulfide bonds. Inhibins are heterodimers of one alpha and one beta subunit. Activins are homo- or heterodimers of beta subunits only. Mainly expressed in the adult liver.

The protein localises to the secreted. Its function is as follows. Inhibins and activins inhibit and activate, respectively, the secretion of follitropin by the pituitary gland. Inhibins/activins are involved in regulating a number of diverse functions such as hypothalamic and pituitary hormone secretion, gonadal hormone secretion, germ cell development and maturation, erythroid differentiation, insulin secretion, nerve cell survival, embryonic axial development or bone growth, depending on their subunit composition. Inhibins appear to oppose the functions of activins. In Mus musculus (Mouse), this protein is Inhibin beta C chain (Inhbc).